The chain runs to 59 residues: UPF0434 protein Rsph17025_2896 (59 aa).

The protein belongs to the UPF0434 family.

The chain is UPF0434 protein Rsph17025_2896 from Cereibacter sphaeroides (strain ATCC 17025 / ATH 2.4.3) (Rhodobacter sphaeroides).